Reading from the N-terminus, the 89-residue chain is Small ribosomal subunit protein uS15 (89 aa).

Belongs to the universal ribosomal protein uS15 family. As to quaternary structure, part of the 30S ribosomal subunit. Forms a bridge to the 50S subunit in the 70S ribosome, contacting the 23S rRNA.

Its function is as follows. One of the primary rRNA binding proteins, it binds directly to 16S rRNA where it helps nucleate assembly of the platform of the 30S subunit by binding and bridging several RNA helices of the 16S rRNA. Forms an intersubunit bridge (bridge B4) with the 23S rRNA of the 50S subunit in the ribosome. The sequence is that of Small ribosomal subunit protein uS15 from Vibrio vulnificus (strain YJ016).